The sequence spans 225 residues: Methylthioribulose-1-phosphate dehydratase (225 aa).

Positions 106 and 108 each coordinate Zn(2+).

Belongs to the aldolase class II family. MtnB subfamily. The cofactor is Zn(2+).

It carries out the reaction 5-(methylsulfanyl)-D-ribulose 1-phosphate = 5-methylsulfanyl-2,3-dioxopentyl phosphate + H2O. It participates in amino-acid biosynthesis; L-methionine biosynthesis via salvage pathway; L-methionine from S-methyl-5-thio-alpha-D-ribose 1-phosphate: step 2/6. Catalyzes the dehydration of methylthioribulose-1-phosphate (MTRu-1-P) into 2,3-diketo-5-methylthiopentyl-1-phosphate (DK-MTP-1-P). In Xanthomonas oryzae pv. oryzae (strain MAFF 311018), this protein is Methylthioribulose-1-phosphate dehydratase.